Reading from the N-terminus, the 354-residue chain is Probable mannitol dehydrogenase 1 (354 aa).

Zn(2+) is bound by residues Cys-43, His-65, Cys-96, Cys-99, Cys-102, Cys-110, and Cys-158.

The protein belongs to the zinc-containing alcohol dehydrogenase family. Zn(2+) serves as cofactor.

The enzyme catalyses D-mannitol + NAD(+) = D-mannose + NADH + H(+). Its function is as follows. Oxidizes mannitol to mannose. Provides the initial step by which translocated mannitol is committed to central metabolism and, by regulating mannitol pool size, is important in regulating salt tolerance at the cellular level. This is Probable mannitol dehydrogenase 1 (CAD1) from Stylosanthes humilis (Townsville stylo).